The primary structure comprises 115 residues: UPF0122 protein lp_1634 (115 aa).

Belongs to the UPF0122 family.

Functionally, might take part in the signal recognition particle (SRP) pathway. This is inferred from the conservation of its genetic proximity to ftsY/ffh. May be a regulatory protein. This chain is UPF0122 protein lp_1634, found in Lactiplantibacillus plantarum (strain ATCC BAA-793 / NCIMB 8826 / WCFS1) (Lactobacillus plantarum).